A 247-amino-acid chain; its full sequence is Carbonic anhydrase (247 aa).

The signal sequence occupies residues 1 to 34 (MMFNKQIFTILILSLSLALAGSGCISEGAEDNVA). Position 93–95 (93–95 (RSD)) interacts with substrate. Glu96 acts as the Proton donor/acceptor in catalysis. 109–110 (QD) serves as a coordination point for substrate. His115 provides a ligand contact to Zn(2+). The active site involves Glu118. Zn(2+) is bound by residues His151 and His156. Asn236 contributes to the substrate binding site.

Belongs to the gamma-class carbonic anhydrase family. Homotrimer. Requires Zn(2+) as cofactor.

The protein localises to the secreted. The catalysed reaction is hydrogencarbonate + H(+) = CO2 + H2O. Reversible hydration of carbon dioxide. Important for growth on acetate. As a probably extracellular enzyme, it may support a H(+)/CH(3)COO(-) symport mechanism and/or conversion of CO(2) to HCO(3)(-), removing excess CO(2) produced by growth on acetate. The chain is Carbonic anhydrase from Methanosarcina thermophila (strain ATCC 43570 / DSM 1825 / OCM 12 / VKM B-1830 / TM-1).